The following is a 348-amino-acid chain: Dihydroorotase (348 aa).

His14 and His16 together coordinate Zn(2+). Substrate contacts are provided by residues 16-18 (HLR) and Asn42. Residues Lys100, His137, and His175 each coordinate Zn(2+). Lys100 bears the N6-carboxylysine mark. Position 137 (His137) interacts with substrate. Leu220 is a binding site for substrate. Asp248 is a Zn(2+) binding site. Residue Asp248 is part of the active site. Positions 252 and 264 each coordinate substrate.

Belongs to the metallo-dependent hydrolases superfamily. DHOase family. Class II DHOase subfamily. In terms of assembly, homodimer. The cofactor is Zn(2+).

It carries out the reaction (S)-dihydroorotate + H2O = N-carbamoyl-L-aspartate + H(+). Its pathway is pyrimidine metabolism; UMP biosynthesis via de novo pathway; (S)-dihydroorotate from bicarbonate: step 3/3. Catalyzes the reversible cyclization of carbamoyl aspartate to dihydroorotate. The chain is Dihydroorotase from Synechococcus sp. (strain CC9605).